The chain runs to 210 residues: DNA-directed RNA polymerases I, II, and III subunit RPABC1 (210 aa).

N-acetylmethionine is present on Met1. Lys81 participates in a covalent cross-link: Glycyl lysine isopeptide (Lys-Gly) (interchain with G-Cter in SUMO2).

Belongs to the archaeal Rpo5/eukaryotic RPB5 RNA polymerase subunit family. As to quaternary structure, component of the RNA polymerase I (Pol I), RNA polymerase II (Pol II) and RNA polymerase III (Pol III) complexes consisting of at least 13, 12 and 17 subunits, respectively. Pol I complex consists of a ten-subunit catalytic core composed of POLR1A/RPA1, POLR1B/RPA2, POLR1C/RPAC1, POLR1D/RPAC2, POLR1H/RPA12, POLR2E/RPABC1, POLR2F/RPABC2, POLR2H/RPABC3, POLR2K/RPABC4 and POLR2L/RPABC5; a mobile stalk subunit POLR1F/RPA43 protruding from the core and additional subunits homologous to general transcription factors POLR1E/RPA49 and POLR1G/RPA34. Part of Pol I pre-initiation complex (PIC), in which Pol I core assembles with RRN3 and promoter-bound UTBF and SL1/TIF-IB complex. Pol II complex contains a ten-subunit catalytic core composed of POLR2A/RPB1, POLR2B/RPB2, POLR2C/RPB3, POLR2I/RPB9, POLR2J/RPB11, POLR2E/RPABC1, POLR2F/RPABC2, POLR2H/RPABC3, POLR2K/RPABC4 and POLR2L/RPABC5 and a mobile stalk composed of two subunits POLR2D/RPB4 and POLR2G/RPB7. Part of Pol II(G) complex, in which Pol II core associates with an additional subunit POLR2M; unlike conventional Pol II, Pol II(G) functions as a transcriptional repressor. Part of TBP-based Pol II pre-initiation complex (PIC), in which Pol II core assembles with general transcription factors and other specific initiation factors including GTF2E1, GTF2E2, GTF2F1, GTF2F2, TCEA1, ERCC2, ERCC3, GTF2H2, GTF2H3, GTF2H4, GTF2H5, GTF2A1, GTF2A2, GTF2B and TBP; this large multi-subunit PIC complex mediates DNA unwinding and targets Pol II core to the transcription start site where the first phosphodiester bond forms. In Pol II complex, this subunit is present in 2-fold molar excess over the other subunits. Pol III complex consists of a ten-subunit catalytic core composed of POLR3A/RPC1, POLR3B/RPC2, POLR1C/RPAC1, POLR1D/RPAC2, POLR3K/RPC10, POLR2E/RPABC1, POLR2F/RPABC2, POLR2H/RPABC3, POLR2K/RPABC4 and POLR2L/RPABC5; a mobile stalk composed of two subunits POLR3H/RPC8 and CRCP/RPC9, protruding from the core and functioning primarily in transcription initiation; and additional subunits homologous to general transcription factors of the RNA polymerase II machinery, POLR3C/RPC3-POLR3F/RPC6-POLR3G/RPC7 heterotrimer required for transcription initiation and POLR3D/RPC4-POLR3E/RPC5 heterodimer involved in both transcription initiation and termination. Component of the PAQosome complex which is responsible for the biogenesis of several protein complexes and which consists of R2TP complex members RUVBL1, RUVBL2, RPAP3 and PIH1D1, URI complex members PFDN2, PFDN6, PDRG1, UXT and URI1 as well as ASDURF, POLR2E and DNAAF10/WDR92. Interacts with URI1.

It localises to the nucleus. Its subcellular location is the nucleolus. Its function is as follows. DNA-dependent RNA polymerase catalyzes the transcription of DNA into RNA using the four ribonucleoside triphosphates as substrates. Common component of RNA polymerases I, II and III which synthesize ribosomal RNA precursors, mRNA precursors and many functional non-coding RNAs, and small RNAs, such as 5S rRNA and tRNAs, respectively. Pol II is the central component of the basal RNA polymerase II transcription machinery. Pols are composed of mobile elements that move relative to each other. In Pol II, POLR2E/RPABC1 is part of the lower jaw surrounding the central large cleft and thought to grab the incoming DNA template. Seems to be the major component in this process. The sequence is that of DNA-directed RNA polymerases I, II, and III subunit RPABC1 from Mus musculus (Mouse).